Consider the following 267-residue polypeptide: Putative transcription factor Ovo-like 1 (267 aa).

4 consecutive C2H2-type zinc fingers follow at residues 118–140 (FTCHICQKAFTYQRMLNRHMKCH), 146–168 (HLCTYCGKGFNDTFDLKRHVRTH), 174–197 (YKCSLCDKAFTQRCSLESHLKKIH), and 213–235 (YVCEECGCTSESQEGHVLHLKEH).

The protein resides in the nucleus. Putative transcription factor. Involved in hair formation and spermatogenesis. May function in the differentiation and/or maintenance of the urogenital system. This is Putative transcription factor Ovo-like 1 (OVOL1) from Bos taurus (Bovine).